Here is a 292-residue protein sequence, read N- to C-terminus: Seed lectin (292 aa).

Residues 1–37 (MATSNSRPHLLQTHKPFSVVLAISITFFLLLLNKVNS) form the signal peptide. N-linked (GlcNAc...) asparagine glycans are attached at residues asparagine 82 and asparagine 154. Mn(2+) contacts are provided by aspartate 163 and aspartate 165. Ca(2+) contacts are provided by aspartate 165, histidine 167, asparagine 169, and aspartate 172. Mn(2+) is bound by residues aspartate 172 and histidine 177. The N-linked (GlcNAc...) asparagine glycan is linked to asparagine 186.

The protein belongs to the leguminous lectin family.

In terms of biological role, mannose/glucose-specific lectin. In Styphnolobium japonicum (Japanese pagoda tree), this protein is Seed lectin.